The primary structure comprises 203 residues: LexA repressor (203 aa).

Positions 29 to 49 (VREIGQEVGLSSSSTVHGYLK) form a DNA-binding region, H-T-H motif. Active-site for autocatalytic cleavage activity residues include serine 126 and lysine 163.

It belongs to the peptidase S24 family. As to quaternary structure, homodimer.

It carries out the reaction Hydrolysis of Ala-|-Gly bond in repressor LexA.. In terms of biological role, represses a number of genes involved in the response to DNA damage (SOS response), including recA and lexA. In the presence of single-stranded DNA, RecA interacts with LexA causing an autocatalytic cleavage which disrupts the DNA-binding part of LexA, leading to derepression of the SOS regulon and eventually DNA repair. The polypeptide is LexA repressor (Pelotomaculum thermopropionicum (strain DSM 13744 / JCM 10971 / SI)).